Reading from the N-terminus, the 232-residue chain is Small ribosomal subunit protein uS2 (232 aa).

The protein belongs to the universal ribosomal protein uS2 family.

This Heliobacterium modesticaldum (strain ATCC 51547 / Ice1) protein is Small ribosomal subunit protein uS2.